A 185-amino-acid polypeptide reads, in one-letter code: Threonylcarbamoyl-AMP synthase (185 aa).

The 185-residue stretch at 1–185 (MKNLNQVVDA…AKTGNTLRQG (185 aa)) folds into the YrdC-like domain.

Belongs to the SUA5 family. TsaC subfamily.

Its subcellular location is the cytoplasm. The enzyme catalyses L-threonine + hydrogencarbonate + ATP = L-threonylcarbamoyladenylate + diphosphate + H2O. Required for the formation of a threonylcarbamoyl group on adenosine at position 37 (t(6)A37) in tRNAs that read codons beginning with adenine. Catalyzes the conversion of L-threonine, HCO(3)(-)/CO(2) and ATP to give threonylcarbamoyl-AMP (TC-AMP) as the acyladenylate intermediate, with the release of diphosphate. The sequence is that of Threonylcarbamoyl-AMP synthase from Aliivibrio fischeri (strain ATCC 700601 / ES114) (Vibrio fischeri).